The sequence spans 529 residues: Glucose transporter 2A (529 aa).

Positions 1–22 (MTERRDNVSHAPDAIEGPNDGA) are disordered. Over 1 to 43 (MTERRDNVSHAPDAIEGPNDGAHAEDTSPGFFSFENLGVAQVQ) the chain is Cytoplasmic. A helical transmembrane segment spans residues 44 to 64 (VVGGTLNGFSIGFVAVYILLY). Residues 65 to 119 (EVATNCSLFKTTEACKAVGSYGCEWKDTEVCSWKKECDSDSDGVNPCESLIGYSS) are Extracellular-facing. The helical transmembrane segment at 120–140 (LYSGIFASAMIVGSMVGSIIA) threads the bilayer. Topologically, residues 141 to 152 (GKCITMFGLKKS) are cytoplasmic. Residues 153–173 (FIIVGVMSVVASALNHISVAT) traverse the membrane as a helical segment. The Extracellular segment spans residues 174–175 (NE). The chain crosses the membrane as a helical span at residues 176-196 (FWVLCAGRVLMGIGLGVVCVI). The Cytoplasmic portion of the chain corresponds to 197 to 214 (CPMYVNENAHPKLSKVDG). Residues 215–235 (VLFQVFITFGIMLAAMLGLIL) form a helical membrane-spanning segment. Over 236–250 (DKTVNYDNDPDMAGR) the chain is Extracellular. A helical transmembrane segment spans residues 251 to 271 (FHGFCAVSSVLSVAMFLVGMF). Topologically, residues 272 to 300 (LRESTATFSQDDDGKADGGMDPNEYGWGQ) are cytoplasmic. Residues 301 to 321 (MLWPLFMGAVTAGTLQLTGIN) traverse the membrane as a helical segment. At 322-339 (AVMNYAPKITENLGMDPS) the chain is on the extracellular side. A helical membrane pass occupies residues 340–360 (LGNFLVMAWNFVTSLVAIPLA). Residues 361–368 (SRFTMRQM) are Cytoplasmic-facing. The chain crosses the membrane as a helical span at residues 369–389 (FITCSFVASCMCLFLCGIPVF). Topologically, residues 390–404 (PGVAEEKVKNGVATT) are extracellular. The chain crosses the membrane as a helical span at residues 405–425 (GIALFIAAFEFGVGSCFFVLA). Residues 426–439 (QDLFPPSFRPKGSS) lie on the Cytoplasmic side of the membrane. Residues 440–460 (FVVMMQFIFNILINLLYPITT) form a helical membrane-spanning segment. Residues 461 to 476 (EAISGGATGDQDKGQA) are Extracellular-facing. A helical transmembrane segment spans residues 477–497 (VVFILFGLIGLICFVLQFFYL). Over 498–529 (YPYDANQDHENDHGTEPVERILSPVDVPTPRN) the chain is Cytoplasmic. The disordered stretch occupies residues 508-529 (NDHGTEPVERILSPVDVPTPRN).

It belongs to the major facilitator superfamily. Sugar transporter (TC 2.A.1.1) family.

It is found in the membrane. In terms of biological role, facilitative glucose transporter. This chain is Glucose transporter 2A (THT2A), found in Trypanosoma brucei brucei.